The sequence spans 374 residues: Alanine racemase (374 aa).

Lys-35 (proton acceptor; specific for D-alanine) is an active-site residue. Residue Lys-35 is modified to N6-(pyridoxal phosphate)lysine. A substrate-binding site is contributed by Arg-133. The Proton acceptor; specific for L-alanine role is filled by Tyr-264. Substrate is bound at residue Met-312.

Belongs to the alanine racemase family. The cofactor is pyridoxal 5'-phosphate.

It carries out the reaction L-alanine = D-alanine. The protein operates within amino-acid biosynthesis; D-alanine biosynthesis; D-alanine from L-alanine: step 1/1. Catalyzes the interconversion of L-alanine and D-alanine. May also act on other amino acids. In Thermobifida fusca (strain YX), this protein is Alanine racemase (alr).